Reading from the N-terminus, the 776-residue chain is Mitochondrial intermediate peptidase (776 aa).

A mitochondrion-targeting transit peptide spans Met-1 to Leu-38. His-560 contacts Zn(2+). Glu-561 is an active-site residue. 2 residues coordinate Zn(2+): His-564 and His-567.

It belongs to the peptidase M3 family. It depends on Zn(2+) as a cofactor.

Its subcellular location is the mitochondrion matrix. The catalysed reaction is Release of an N-terminal octapeptide as second stage of processing of some proteins imported into the mitochondrion.. Functionally, cleaves proteins, imported into the mitochondrion, to their mature size. While most mitochondrial precursor proteins are processed to the mature form in one step by mitochondrial processing peptidase (MPP), the sequential cleavage by MIP of an octapeptide after initial processing by MPP is a required step for a subgroup of nuclear-encoded precursor proteins destined for the matrix or the inner membrane. In Coprinopsis cinerea (strain Okayama-7 / 130 / ATCC MYA-4618 / FGSC 9003) (Inky cap fungus), this protein is Mitochondrial intermediate peptidase (OCT1).